Consider the following 380-residue polypeptide: Phthiodiolone/phenolphthiodiolone dimycocerosates ketoreductase (380 aa).

It belongs to the mer family. Phthiodiolone/phenolphthiodiolone dimycocerosates ketoreductase subfamily.

In terms of biological role, catalyzes the reduction of the keto moiety of phthiodiolone dimycocerosates (DIM B) and glycosylated phenolphthiodiolone dimycocerosates to form the intermediate compounds phthiotriol and glycosylated phenolphthiotriol dimycocerosates during phthiocerol dimycocerosates (DIM A) and glycosylated phenolphthiocerol dimycocerosates (PGL) biosynthesis. This chain is Phthiodiolone/phenolphthiodiolone dimycocerosates ketoreductase, found in Mycobacterium sp. (strain JLS).